A 1022-amino-acid chain; its full sequence is Histone-lysine N-methyltransferase TRX1 (1022 aa).

The interval 31-151 (SSAPCPLPKK…QRQGVHKEAA (121 aa)) is disordered. The span at 65-78 (EGPPPSPATAPPML) shows a compositional bias: pro residues. The segment covering 127–139 (GGAERRGYFSEPK) has biased composition (basic and acidic residues). Residues 264–327 (PGDLVWAKLT…LKQAVPFLNG (64 aa)) enclose the PWWP domain. Over residues 367–393 (SMEKGSSDANSNKDVHSCDNLSEDKTA) the composition is skewed to basic and acidic residues. Residues 367-399 (SMEKGSSDANSNKDVHSCDNLSEDKTAESGGDY) are disordered. Residues 402–461 (MTPIELGNLRVSKLGRIVTDSDYFHNKKHIWPEGYTAFRKFRSVKDPHVVILYKMEVLRN) form the FYR N-terminal domain. In terms of domain architecture, FYR C-terminal spans 465-548 (KARPLFRVTS…SCLKYFENAG (84 aa)). The segment at 553–609 (GYRAVHVNWKDLDYCSVCDMDEEYEDNLFLQCDKCRMMVHARCYGELEPLNGVLWLC) adopts a Phorbol-ester/DAG-type zinc-finger fold. 2 PHD-type zinc fingers span residues 564 to 615 (LDYC…CRPE) and 677 to 744 (LLCS…KKHR). The interval 620–744 (SPRCCLCPVT…RLLSYCKKHR (125 aa)) is extended PHD domain (ePHD). An SET domain is found at 861–979 (RRLAFGKSRI…PWEELTYDYR (119 aa)). C943 contributes to the Zn(2+) binding site. Position 978 (Y978) interacts with S-adenosyl-L-methionine. The Post-SET domain occupies 985–1001 (QRLPCYCGFPKCRGVVN). Zn(2+) contacts are provided by C989, C991, and C996.

The protein belongs to the class V-like SAM-binding methyltransferase superfamily. Histone-lysine methyltransferase family. TRX/MLL subfamily. Interacts with EHD3. In terms of tissue distribution, expressed in leaf blades and panicles.

The protein localises to the nucleus. It carries out the reaction L-lysyl(4)-[histone H3] + S-adenosyl-L-methionine = N(6)-methyl-L-lysyl(4)-[histone H3] + S-adenosyl-L-homocysteine + H(+). Functionally, possesses histone H3 methyltransferase activity in vitro. Methylates 'Lys-4' of histone H3. H3 'Lys-4' methylation represents a specific tag for epigenetic transcriptional activation. Functions as a receptor for the lipid messenger phosphatidylinositol 5-phosphate (PI5P), which negatively regulates its transcriptional activation activity. Involved in the regulation of flowering time and floral induction under long day (LD) conditions. Acts as an activator of flowering under LD conditions. May function through binding to EHD3, a repressor of GHD7. This chain is Histone-lysine N-methyltransferase TRX1, found in Oryza sativa subsp. japonica (Rice).